A 108-amino-acid chain; its full sequence is UPF0145 protein sll118 (108 aa).

The protein belongs to the UPF0145 family.

This is UPF0145 protein sll118 from Synechocystis sp. (strain ATCC 27184 / PCC 6803 / Kazusa).